A 248-amino-acid polypeptide reads, in one-letter code: MSGHSKWATIKHKKGALDAKRGKIFTRLIKEITMAAKQGGDAEKNPRLRSAVAAAKAENMPADNIKRAIQRGTGEIEGVNYEEITFEGYGPGGVAILVEVTTDNRNRTVSEIRHAFGKNGGNMGEAGSVAWMFAKKGSIVIAKAAAKEDDLMNLVLENGADDLKDDGDNWEILCDPNAYEGVLEAVKKAGITPEVAEIGMIPQNYIKLEGNQVNTMVRLLEALEDGDDVQHVYSNVDFDQAQLEQVAG.

The protein belongs to the TACO1 family.

It is found in the cytoplasm. The polypeptide is Probable transcriptional regulatory protein Acid345_2125 (Koribacter versatilis (strain Ellin345)).